Reading from the N-terminus, the 188-residue chain is Marginal zone B- and B1-cell-specific protein (188 aa).

The N-terminal stretch at 1 to 21 (MRLPLPLLLLFGCRAILGSFG) is a signal peptide. Cystine bridges form between Cys49–Cys177, Cys52–Cys170, and Cys94–Cys142. Positions 185 to 188 (REEL) match the Prevents secretion from ER motif.

This sequence belongs to the MZB1 family. In terms of assembly, part of the ER chaperone complex, a multi-protein complex in the endoplasmic reticulum containing a large number of molecular chaperones which associates with unassembled incompletely folded immunoglobulin heavy chains. Interacts with HSP90B1 and PDIA3 in a calcium-dependent manner. Forms an interchain disulfide bond with IgM monomers.

The protein resides in the endoplasmic reticulum lumen. The protein localises to the secreted. Associates with immunoglobulin M (IgM) heavy and light chains and promotes IgM assembly and secretion. May exert its effect by acting as a molecular chaperone or as an oxidoreductase as it displays a low level of oxidoreductase activity. Helps to diversify peripheral B-cell functions by regulating Ca(2+) stores, antibody secretion, and integrin activation. Its function is as follows. Acts as a hormone-regulated adipokine/pro-inflammatory cytokine that is implicated in causing chronic inflammation, affecting cellular expansion and blunting insulin response in adipocytes. May have a role in the onset of insulin resistance. This is Marginal zone B- and B1-cell-specific protein (Mzb1) from Rattus norvegicus (Rat).